Here is a 143-residue protein sequence, read N- to C-terminus: 5-hydroxymethyl-dUMP N-hydrolase (143 aa).

5-hydroxymethyl-dUMP is bound by residues glycine 7, isoleucine 9, arginine 10, glycine 11, serine 77, glycine 79, glutamate 83, and serine 107.

The protein belongs to the 2'-deoxynucleoside 5'-phosphate N-hydrolase 1 family. In terms of assembly, monomer and homodimer.

The protein resides in the cytoplasm. The protein localises to the nucleus. The catalysed reaction is 5-hydroxymethyl-dUMP + H2O = 5-hydroxymethyluracil + 2-deoxy-D-ribose 5-phosphate. Part of a nucleotide salvage pathway that eliminates epigenetically modified 5-hydroxymethyl-dCMP (hmdCMP) in a two-step process entailing deamination to cytotoxic 5-hydroxymethyl-dUMP (hmdUMP), followed by its hydrolysis into 5-hydroxymethyluracil (hmU) and 2-deoxy-D-ribose 5-phosphate (deoxyribosephosphate). The protein is 5-hydroxymethyl-dUMP N-hydrolase (dnph1) of Danio rerio (Zebrafish).